The chain runs to 345 residues: Papain (345 aa).

The first 18 residues, 1-18 (MAMIPSISKLLFVAICLF), serve as a signal peptide directing secretion. The propeptide at 19 to 133 (VYMGLSFGDF…EEVLNDGDVN (115 aa)) is activation peptide. 3 disulfides stabilise this stretch: Cys-155–Cys-196, Cys-189–Cys-228, and Cys-286–Cys-333. Residue Cys-158 is part of the active site. Cys-158 is a binding site for E64. Residue Cys-158 coordinates leupeptin. Residues His-292 and Asn-308 contribute to the active site.

Belongs to the peptidase C1 family.

The enzyme catalyses Hydrolysis of proteins with broad specificity for peptide bonds, but preference for an amino acid bearing a large hydrophobic side chain at the P2 position. Does not accept Val in P1'.. Repressed by the active-site-directed cysteine protease inhibitor E64 (L-trans-epoxysuccinyl-leucylamide-(4-guanido)-butane) produced by Aspergillus japonicus. Inhibited by the inhibitor of cysteine proteases from Trypanosoma brucei (TbICP, rhodesain) and Colocasia esculenta cv. Kaohsiung no. 1 (CeCPI, tarocystatin). Repressed by leupeptin, a peptidic cysteine, serine and threonine protease inhibitor. Functionally, cysteine proteinase with a high level of diversity in substrate specificity, an amino acid bearing a large hydrophobic side chain at the P2 position is preferred. The sequence is that of Papain from Carica papaya (Papaya).